Consider the following 214-residue polypeptide: Inner membrane-spanning protein YciB (214 aa).

5 helical membrane passes run 11–31 (ILFF…VAII), 50–70 (MHII…ILQD), 81–101 (VNWG…KPII), 119–139 (LSYM…YVAY), and 149–169 (FKLF…GVYI).

Belongs to the YciB family.

It localises to the cell inner membrane. Functionally, plays a role in cell envelope biogenesis, maintenance of cell envelope integrity and membrane homeostasis. The polypeptide is Inner membrane-spanning protein YciB (Hydrogenovibrio crunogenus (strain DSM 25203 / XCL-2) (Thiomicrospira crunogena)).